We begin with the raw amino-acid sequence, 390 residues long: Glutamate 5-kinase (390 aa).

ATP is bound at residue Lys29. The substrate site is built by Ser69, Asp156, and Asn168. Residue 188–189 (TD) coordinates ATP. A PUA domain is found at 295–374 (SGSLIVDAGA…EQFDRILGNN (80 aa)).

Belongs to the glutamate 5-kinase family.

The protein localises to the cytoplasm. It catalyses the reaction L-glutamate + ATP = L-glutamyl 5-phosphate + ADP. It participates in amino-acid biosynthesis; L-proline biosynthesis; L-glutamate 5-semialdehyde from L-glutamate: step 1/2. Catalyzes the transfer of a phosphate group to glutamate to form L-glutamate 5-phosphate. This Psychrobacter cryohalolentis (strain ATCC BAA-1226 / DSM 17306 / VKM B-2378 / K5) protein is Glutamate 5-kinase.